The chain runs to 352 residues: B1 bradykinin receptor (352 aa).

Over 1–41 the chain is Extracellular; it reads MASWPPLELQSSNQSQLFPQNATACDNAPEAWDLLHRVLPT. Residues asparagine 13 and asparagine 21 are each glycosylated (N-linked (GlcNAc...) asparagine). Residues 42–62 traverse the membrane as a helical segment; sequence FIISICSFGLLGNLFVLLVFL. Residues 63–72 lie on the Cytoplasmic side of the membrane; sequence LPRRRLNVAE. The chain crosses the membrane as a helical span at residues 73–93; the sequence is IYLANLAASDLVFVLGLPFWA. The Extracellular portion of the chain corresponds to 94–110; that stretch reads ENIWNQFNWPFGALLCR. Cysteines 109 and 188 form a disulfide. The helical transmembrane segment at 111–131 threads the bilayer; the sequence is GINGVIKANLFISIFLVVAIS. Residues 132 to 153 are Cytoplasmic-facing; it reads QDRYCLLVHPMASRRRQRRRQA. Residues 154 to 174 traverse the membrane as a helical segment; sequence RVTCVLIWVVGGLLSIPTFLL. Topologically, residues 175–206 are extracellular; that stretch reads RSIQAVPDLNITACILLLPHEAWHFARIVELN. Asparagine 184 carries an N-linked (GlcNAc...) asparagine glycan. A helical membrane pass occupies residues 207–227; it reads ILAFLLPLAAIVFFNYHILAS. Over 228–250 the chain is Cytoplasmic; sequence LRGREEVSRTRCGGRKDSKTTAL. A helical membrane pass occupies residues 251 to 271; that stretch reads ILTLVVAFLVCWAPYHFFAFL. Residues 272–294 are Extracellular-facing; sequence EFLFQVQAIRGCFWEDFIDLGLQ. The helical transmembrane segment at 295–315 threads the bilayer; sequence LANFLAFTNSSLNPVIYVFVG. At 316-352 the chain is on the cytoplasmic side; the sequence is RLFRTKVWELYKQCTPKSLAPISSSHRKEIFQLFWRN. A lipid anchor (S-palmitoyl cysteine) is attached at cysteine 329.

The protein belongs to the G-protein coupled receptor 1 family. Bradykinin receptor subfamily. BDKRB1 sub-subfamily.

Its subcellular location is the cell membrane. This is a receptor for bradykinin. Could be a factor in chronic pain and inflammation. In Chlorocebus aethiops (Green monkey), this protein is B1 bradykinin receptor (BDKRB1).